The chain runs to 137 residues: NADH-quinone oxidoreductase subunit A (137 aa).

The next 3 helical transmembrane spans lie at 12-32, 66-86, and 95-115; these read WGFAIFLLGVVGLCAFMLGLS, FYLVAMLFVIFDIEALFLFAW, and WTGFVEALVFIAILLAGLVYL.

This sequence belongs to the complex I subunit 3 family. In terms of assembly, NDH-1 is composed of 13 different subunits. Subunits NuoA, H, J, K, L, M, N constitute the membrane sector of the complex.

It is found in the cell inner membrane. It carries out the reaction a quinone + NADH + 5 H(+)(in) = a quinol + NAD(+) + 4 H(+)(out). Its function is as follows. NDH-1 shuttles electrons from NADH, via FMN and iron-sulfur (Fe-S) centers, to quinones in the respiratory chain. The immediate electron acceptor for the enzyme in this species is believed to be ubiquinone. Couples the redox reaction to proton translocation (for every two electrons transferred, four hydrogen ions are translocated across the cytoplasmic membrane), and thus conserves the redox energy in a proton gradient. The sequence is that of NADH-quinone oxidoreductase subunit A from Pseudomonas putida (strain ATCC 700007 / DSM 6899 / JCM 31910 / BCRC 17059 / LMG 24140 / F1).